The primary structure comprises 550 residues: MSADDGGIRAAQDKERARETPGHGHSCQEMLSESEGTVPLGEAWESPHIKMEPEEPHPEGVSQETRAEGARGWVPLSQGTKEKVCFLPGGALPAPQTPVLSREGRTRDRQMAAALLTAWSQMPVTFEDMALYLSREEWGRLDHTQQSFYREVLQKRSGLSLGFPFSRPFWASQVQGKGEAPGSSRQLGHEEEEKRGVVEVDKEELAASLGALGDAKSFKSRMGRAQGEAPRCGQRAASGQNSGPAKDDVQPCPVKEAQLESAPPDTDLPKTQEGHFPEQPREGGTAAPESSEEGLALDSEAGKKTYKCEQCGKAFSWHSHLVTHRRTHTGEKPYACTDCGKRFGRSSHLIQHQIIHTGEKPYTCPSCWKSFSHHSTLIQHQRIHTGEKPYVCDRCAKRFTRRSDLVTHQGTHTGAKPHKCPICGKCFTQSSALVTHQRTHTGVKPYPCPECGKCFSQRSNLIAHNRTHTGEKPYHCLDCGKSFSHSSHLTAHQRTHRGVRPYSCPLCGKSFSRRSNLHRHEKIHTAGPKALAMLMLGAAGTLAAPPPAPT.

3 disordered regions span residues 1 to 67 (MSAD…ETRA), 174 to 200 (VQGK…VVEV), and 216 to 296 (KSFK…EGLA). 3 stretches are compositionally biased toward basic and acidic residues: residues 11–22 (AQDKERARETPG), 45–58 (ESPH…EPHP), and 187–200 (LGHE…VVEV). The 70-residue stretch at 124-193 (VTFEDMALYL…SRQLGHEEEE (70 aa)) folds into the KRAB domain. Lysine 216 is covalently cross-linked (Glycyl lysine isopeptide (Lys-Gly) (interchain with G-Cter in SUMO2)). The segment covering 267-281 (DLPKTQEGHFPEQPR) has biased composition (basic and acidic residues). Position 290 is a phosphoserine (serine 290). 8 C2H2-type zinc fingers span residues 306 to 328 (YKCE…RRTH), 334 to 356 (YACT…QIIH), 362 to 384 (YTCP…QRIH), 390 to 412 (YVCD…QGTH), 418 to 440 (HKCP…QRTH), 446 to 468 (YPCP…NRTH), 474 to 496 (YHCL…QRTH), and 502 to 524 (YSCP…EKIH).

Belongs to the krueppel C2H2-type zinc-finger protein family.

The protein resides in the nucleus. Functionally, transcriptional repressor involved in regulating MPV17L expression. By regulating MPV17L expression, contributes to the regulation of genes involved in H(2)O(2) metabolism and the mitochondrial apoptotic cascade. The protein is Transcriptional repressor RHIT (ZNF205) of Bos taurus (Bovine).